A 275-amino-acid chain; its full sequence is Transmembrane protein 45B (275 aa).

A run of 7 helical transmembrane segments spans residues 7-27, 47-67, 94-114, 116-136, 146-166, 180-200, and 212-232; these read HALP…KYPL, IVEA…EQFV, LFFA…HVPL, VDRL…YYHV, IHSL…LEVI, LIIL…PPFG, and LMFI…IVAV. Phosphoserine is present on residues Ser-270 and Ser-272.

This sequence belongs to the TMEM45 family. In terms of assembly, (Microbial infection) Interacts with sindbis virus nsP1 and nsP4; these interactions lead to viral RNA replication inhibition. As to quaternary structure, (Microbial infection) Interacts with chikungunya virus nsP1 and nsP4; these interactions lead to viral RNA replication inhibition.

Its subcellular location is the endosome membrane. It is found in the lysosome membrane. It localises to the golgi apparatus. The protein resides in the trans-Golgi network membrane. Functionally, plays a role in innate immunity. Mechanistically, promotes alphaviruses RNA degradation by interacting with the viral polymerase nsP4 and the mRNA-capping enzyme nsP1 and thereby interfering with the interaction between viral RNA and nsP1. The polypeptide is Transmembrane protein 45B (TMEM45B) (Homo sapiens (Human)).